The chain runs to 203 residues: Large ribosomal subunit protein bL25 (203 aa).

It belongs to the bacterial ribosomal protein bL25 family. CTC subfamily. As to quaternary structure, part of the 50S ribosomal subunit; part of the 5S rRNA/L5/L18/L25 subcomplex. Contacts the 5S rRNA. Binds to the 5S rRNA independently of L5 and L18.

This is one of the proteins that binds to the 5S RNA in the ribosome where it forms part of the central protuberance. The chain is Large ribosomal subunit protein bL25 from Cereibacter sphaeroides (strain ATCC 17025 / ATH 2.4.3) (Rhodobacter sphaeroides).